A 289-amino-acid polypeptide reads, in one-letter code: MPELPEVEVVRRGLEEHLSDGVIHDVDVRHPRAVRAQPGGAAELVALLDGARIQSIERRGKYMWLVLNNGRALFVHLGMSGQMLIHEASDPALPTTHVRISARVDVGEKDLVLSFVDQRTFGQWQVTPVVADPHGGFTGVPVPVAHIAPDPFEAVFDPAVVARRLRAKKTDVKRAILDQTLVSGIGNIYADEALWAAGVAPSRRTRGMRQRDAVAVLEQAGAVMRRALAQGGTSFDSLYVNVNGASGYFARSLNAYGRAGKPCPRCGEPIVRVQWTNRSSHFCPQCQSS.

Catalysis depends on Pro-2, which acts as the Schiff-base intermediate with DNA. Glu-3 functions as the Proton donor in the catalytic mechanism. Catalysis depends on Lys-61, which acts as the Proton donor; for beta-elimination activity. Residues His-97, Arg-119, and Lys-168 each contribute to the DNA site. The FPG-type zinc finger occupies 254 to 288; that stretch reads NAYGRAGKPCPRCGEPIVRVQWTNRSSHFCPQCQS. The active-site Proton donor; for delta-elimination activity is Arg-278.

This sequence belongs to the FPG family. In terms of assembly, monomer. Requires Zn(2+) as cofactor.

The catalysed reaction is Hydrolysis of DNA containing ring-opened 7-methylguanine residues, releasing 2,6-diamino-4-hydroxy-5-(N-methyl)formamidopyrimidine.. The enzyme catalyses 2'-deoxyribonucleotide-(2'-deoxyribose 5'-phosphate)-2'-deoxyribonucleotide-DNA = a 3'-end 2'-deoxyribonucleotide-(2,3-dehydro-2,3-deoxyribose 5'-phosphate)-DNA + a 5'-end 5'-phospho-2'-deoxyribonucleoside-DNA + H(+). Functionally, involved in base excision repair of DNA damaged by oxidation or by mutagenic agents. Acts as a DNA glycosylase that recognizes and removes damaged bases. Has a preference for oxidized purines, such as 7,8-dihydro-8-oxoguanine (8-oxoG). Has AP (apurinic/apyrimidinic) lyase activity and introduces nicks in the DNA strand. Cleaves the DNA backbone by beta-delta elimination to generate a single-strand break at the site of the removed base with both 3'- and 5'-phosphates. This Corynebacterium urealyticum (strain ATCC 43042 / DSM 7109) protein is Formamidopyrimidine-DNA glycosylase.